A 397-amino-acid chain; its full sequence is Mannitol-1-phosphate 5-dehydrogenase (397 aa).

Residue 9-20 (AVHFGAGNIGRG) coordinates NAD(+). K220 is an active-site residue.

Belongs to the mannitol dehydrogenase family. In terms of assembly, monomer.

It catalyses the reaction D-mannitol 1-phosphate + NAD(+) = beta-D-fructose 6-phosphate + NADH + H(+). Its function is as follows. Catalyzes the NAD(H)-dependent interconversion of D-fructose 6-phosphate and D-mannitol 1-phosphate in the mannitol metabolic pathway. The protein is Mannitol-1-phosphate 5-dehydrogenase of Podospora anserina (strain S / ATCC MYA-4624 / DSM 980 / FGSC 10383) (Pleurage anserina).